Reading from the N-terminus, the 309-residue chain is MAKTYIFGHKNPDTDAISSAIIMAEFEQLRGNSGAKAYRLGDVSAETQFALDTFNVPAPELLTDDLDGQDVILVDHNEFQQSSDTIASATIKHVIDHHRIANFETAGPLCYRAEPVGCTATILYKMFRERGFEIKPEIAGLMLSAIISDSLLFKSPTCTQQDVKAAEELKDIAKVDIQKYGLDMLKAGASTTDKSVEFLLNMDAKSFTMGDYVTRIAQVNAVDLDEVLNRKEDLEKEMLAVSAQEKYDLFVLVVTDIINSDSKILVVGAEKDKVGEAFNVQLEDDMAFLSGVVSRKKQIVPQITEALTK.

The Mn(2+) site is built by His-9, Asp-13, Asp-15, Asp-75, His-97, and Asp-149.

This sequence belongs to the PPase class C family. Requires Mn(2+) as cofactor.

The protein resides in the cytoplasm. It catalyses the reaction diphosphate + H2O = 2 phosphate + H(+). The chain is Probable manganese-dependent inorganic pyrophosphatase from Staphylococcus aureus (strain COL).